The following is an 85-amino-acid chain: Cell division topological specificity factor (85 aa).

Belongs to the MinE family.

Functionally, prevents the cell division inhibition by proteins MinC and MinD at internal division sites while permitting inhibition at polar sites. This ensures cell division at the proper site by restricting the formation of a division septum at the midpoint of the long axis of the cell. In Xylella fastidiosa (strain M23), this protein is Cell division topological specificity factor.